A 552-amino-acid chain; its full sequence is MTSLREFRKLCCDIYHASGYKEKSKLIRDFITDRDDKYLIIKLLLPGLDDRIYNMNDKQIIKLYSIIFKQSQEDMLQDLGYGYIGDTIRTFFKENTEIRPRDKSILTLEDVDSFLTTLSSVTKESHQIKLLTDIASVCTCNDLKCVVMLIDKDLKIKAGPRYVLNAISPNAYDVFRKSNNLKEIIENSSKQNLDSISISVMTPINPMLAESCDSVNKAFKKFPSGMFAEVKYDGERVQVHKNNNEFAFFSRNMKPVLSHKVDYLKEYIPKAFKKATSIVLDSEIVLVDEHNVPLPFGSLGIHKKKEYKNSNMCLFVFDCLYFDGFDMTDIPLYERRSFLKDVMVEIPNRIVFSELTNISNESQLTDVLDDALTRKLEGLVLKDINGVYEPGKRRWLKIKRDYLNEGSMADSADLVVLGAYYGKGAKGGIMAVFLMGCYDDESGKWKTVTKCSGHDDNTLRVLQDQLTMIKINKDPKKIPEWLVVNKIYIPDFVVEDPKQSQIWEISGAEFTSSKSHTANGISIRFPRFTRIREDKTWKESTHLNDLVNLTKS.

Residue Glu-229 participates in ATP binding. Catalysis depends on Lys-231, which acts as the N6-AMP-lysine intermediate. Arg-236 and Glu-283 together coordinate ATP. The Mg(2+) site is built by Glu-283 and Glu-377. ATP is bound by residues Lys-382 and Lys-397.

This sequence belongs to the ATP-dependent DNA ligase family. Interacts with host TOP2A and TOP2B. The cofactor is Mg(2+).

The protein localises to the host cytoplasm. It carries out the reaction ATP + (deoxyribonucleotide)n-3'-hydroxyl + 5'-phospho-(deoxyribonucleotide)m = (deoxyribonucleotide)n+m + AMP + diphosphate.. Its function is as follows. DNA ligase that seals nicks in double-stranded DNA during DNA replication, DNA recombination and DNA repair. Recruits cellular topoisomerase II to sites of viral replication and assembly. This is DNA ligase (OPG180) from Vaccinia virus (strain Copenhagen) (VACV).